A 287-amino-acid polypeptide reads, in one-letter code: Protein REVEILLE 2 (287 aa).

The HTH myb-type domain maps to T31 to A85. A DNA-binding region (H-T-H motif) is located at residues W58–F81. A disordered region spans residues Q134–S177. Residues I156–S169 show a composition bias toward low complexity.

It localises to the nucleus. Positive regulator for cold-responsive gene expression and cold tolerance. Part of a regulatory feedback loop that controls a subset of the circadian outputs and modulates the central oscillator. Negatively self-regulates its own expression. The protein is Protein REVEILLE 2 (RVE2) of Arabidopsis thaliana (Mouse-ear cress).